The following is a 77-amino-acid chain: Defensin-like protein 91 (77 aa).

A signal peptide spans 1-27 (METKKISYFLLPSLMIVALIFQPMCSA). Disulfide bonds link C38/C75, C43/C64, C49/C73, and C53/C74.

The protein belongs to the DEFL family.

The protein localises to the secreted. The polypeptide is Defensin-like protein 91 (LCR47) (Arabidopsis thaliana (Mouse-ear cress)).